The primary structure comprises 103 residues: Large ribosomal subunit protein bL21 (103 aa).

This sequence belongs to the bacterial ribosomal protein bL21 family. In terms of assembly, part of the 50S ribosomal subunit. Contacts protein L20.

Functionally, this protein binds to 23S rRNA in the presence of protein L20. The protein is Large ribosomal subunit protein bL21 of Cupriavidus pinatubonensis (strain JMP 134 / LMG 1197) (Cupriavidus necator (strain JMP 134)).